We begin with the raw amino-acid sequence, 317 residues long: Flavin-dependent thymidylate synthase (317 aa).

Residue Ser-46 coordinates FAD. The insert stretch occupies residues 55-166 (FEWKKEKWIE…ELETDMDFYT (112 aa)). Residues 100 to 317 (AVKERIKEAF…YRGTDKKNVI (218 aa)) enclose the ThyX domain. Residues 178-181 (QWMR), 189-193 (EVSKR), and Arg-259 each bind dUMP. Residues 181-183 (RHR) and Glu-189 each bind FAD. The ThyX motif signature appears at 181-191 (RHRFGSYNEVS). Residue Asn-281 coordinates FAD. Arg-286 serves as a coordination point for dUMP. The active-site Involved in ionization of N3 of dUMP, leading to its activation is Arg-286.

It belongs to the thymidylate synthase ThyX family. Homotetramer. Requires FAD as cofactor.

It carries out the reaction dUMP + (6R)-5,10-methylene-5,6,7,8-tetrahydrofolate + NADPH + H(+) = dTMP + (6S)-5,6,7,8-tetrahydrofolate + NADP(+). It functions in the pathway pyrimidine metabolism; dTTP biosynthesis. Its function is as follows. Catalyzes the reductive methylation of 2'-deoxyuridine-5'-monophosphate (dUMP) to 2'-deoxythymidine-5'-monophosphate (dTMP) while utilizing 5,10-methylenetetrahydrofolate (mTHF) as the methyl donor, and NADPH and FADH(2) as the reductant. This is Flavin-dependent thymidylate synthase from Aquifex aeolicus (strain VF5).